A 207-amino-acid chain; its full sequence is Small ribosomal subunit protein uS4 (207 aa).

A disordered region spans residues Lys-31–Asp-51. The S4 RNA-binding domain occupies Ser-97–Leu-160.

The protein belongs to the universal ribosomal protein uS4 family. Part of the 30S ribosomal subunit. Contacts protein S5. The interaction surface between S4 and S5 is involved in control of translational fidelity.

Functionally, one of the primary rRNA binding proteins, it binds directly to 16S rRNA where it nucleates assembly of the body of the 30S subunit. In terms of biological role, with S5 and S12 plays an important role in translational accuracy. The chain is Small ribosomal subunit protein uS4 from Bordetella avium (strain 197N).